We begin with the raw amino-acid sequence, 1277 residues long: Clustered mitochondria protein 1 (1277 aa).

Disordered regions lie at residues 19–39 (LPKE…QSSK) and 148–176 (LPLG…NTFK). Residues 27–36 (HNTKHLKKTQ) show a composition bias toward basic residues. The segment covering 153-176 (IKERSKQEEKDEKSDPEEKKNTFK) has biased composition (basic and acidic residues). The Clu domain occupies 339 to 596 (PPNNPDYLRL…NTYPLDINFA (258 aa)). TPR repeat units follow at residues 704-738 (GINM…VEQD), 1020-1053 (AEKY…YERV), and 1148-1181 (GYTE…FTKQ). The tract at residues 1212–1277 (LAQDQMSTTG…TNNKKKHGKK (66 aa)) is disordered. Basic and acidic residues predominate over residues 1235-1249 (KKDDVKPELANKSVD). Position 1247 is a phosphoserine (serine 1247). The segment covering 1264 to 1277 (SKNKTNNKKKHGKK) has biased composition (basic residues).

Belongs to the CLU family. May associate with the eukaryotic translation initiation factor 3 (eIF-3) complex. Associates with the 80S ribosome.

The protein localises to the cytoplasm. MRNA-binding protein involved in proper cytoplasmic distribution of mitochondria. This Saccharomyces cerevisiae (strain ATCC 204508 / S288c) (Baker's yeast) protein is Clustered mitochondria protein 1.